Consider the following 548-residue polypeptide: Probable malate:quinone oxidoreductase (548 aa).

The tract at residues 521–548 (DKPQAADSTPKPQLKPQPVQKEVADIAL) is disordered. Over residues 530–541 (PKPQLKPQPVQK) the composition is skewed to low complexity.

Belongs to the MQO family. FAD serves as cofactor.

The catalysed reaction is (S)-malate + a quinone = a quinol + oxaloacetate. It functions in the pathway carbohydrate metabolism; tricarboxylic acid cycle; oxaloacetate from (S)-malate (quinone route): step 1/1. The polypeptide is Probable malate:quinone oxidoreductase (Escherichia coli O139:H28 (strain E24377A / ETEC)).